A 33-amino-acid polypeptide reads, in one-letter code: uncharacterized protein (33 aa).

Residues 1-24 are disordered; that stretch reads MRTGTRCDLGELSHPRKTLPPRGM.

This is an uncharacterized protein from Treponema pallidum (strain Nichols).